The sequence spans 372 residues: uncharacterized protein (372 aa).

Positions 1-33 are cleaved as a signal peptide; sequence MVRRALRLAAGTASLAAGTWLLRALHGTPAALG.

It to K.pneumoniae RomA.

This is an uncharacterized protein from Mycobacterium bovis (strain ATCC BAA-935 / AF2122/97).